The following is an 80-amino-acid chain: uncharacterized protein (80 aa).

This is an uncharacterized protein from Enterobacteria phage T4 (Bacteriophage T4).